We begin with the raw amino-acid sequence, 1981 residues long: Nonribosomal peptide synthetase rstn8 (1981 aa).

Residues 251–638 (SYAALEQESA…ELGEIEYQAS (388 aa)) are adenylation. The 78-residue stretch at 763-840 (HHAGQKYDEM…ELFHRSQKTP (78 aa)) folds into the Carrier 1 domain. The residue at position 800 (serine 800) is an O-(pantetheine 4'-phosphoryl)serine. Residues 883 to 1293 (EDIYPCSPLQ…DASMGTILSQ (411 aa)) are condensation 1. The Carrier 2 domain occupies 1438 to 1514 (EPLLPLEATL…CLASTLNSRP (77 aa)). Serine 1475 is modified (O-(pantetheine 4'-phosphoryl)serine). Positions 1586–1978 (EEQIDLVSFA…TFAQSIERII (393 aa)) are condensation 1. The segment at 1754 to 1774 (HHHHQHEGRQHHGASETNGNR) is disordered.

The protein belongs to the NRP synthetase family. Requires pantetheine 4'-phosphate as cofactor.

The enzyme catalyses 2 L-tryptophan = cyclo(L-Trp-L-Trp) + 2 H2O. It functions in the pathway alkaloid biosynthesis. Functionally, nonribosomal peptide synthetase; part of the gene cluster that mediates the biosynthesis of okaramine B, a prenylated indole alkaloid that possesses an unusual octacyclic ring system, including a four-membered azetidine ring and an eight-membered azocine ring, and that exhibits insecticidal activity against silkworm larvae. Within the pathway, okaA acts as a bimodular non-ribosomal peptide synthetase (NRPS) that condenses two tryptophan molecules into cyclo(L-Trp-L-Trp). Prenylation by the prenyltransferase okaC then leads to the formation of cyclo(N8-(alpha,alpha-dimethylallyl)-L-Trp-6a-(alpha,alpha-dime-thylallyl)-L-Trp). This is followed by indole 2,3-epoxidation by the FAD-dependent monooxygenase okaB to facilitate the formation of the hexahydropyrrolo[2,3-b]indole (HPI) moiety of okaramine C. The cytochrome P450 monooxygenase okaD then likely catalyzes formation of the eight-membered ring of okaramine A. The dioxygenase okaE further forms the unusual 2-dimethyl-3-methyl-azetidine ring to yield 12-deshydroxyl okaramine E, as well as the hydroxylation of 12-deshydroxyl okaramine E to produce okaramine E. The cytochrome P450 monoxygenase okaG converts 12-deshydroxyl okaramine E into 3-desmethyl okaramine B which is further methylated by the methyltransferase okaF into okaramine B. In a shunt pathway, okaG and okaF together are also able to convert okaramine E into okaramine D. Okaramine H is produced by nonenzymatic conversion from okaramine A. The sequence is that of Nonribosomal peptide synthetase rstn8 from Penicillium ochrochloron.